The following is a 369-amino-acid chain: Trichocyst matrix protein T1-B (369 aa).

An N-terminal signal peptide occupies residues 1-16; it reads MYKLAVCTLLILSVTA. Positions 17 to 55 are excised as a propeptide; it reads IDVTNSVWTSHDQKAFAQIKQSGWGNFILNFGELHLQTG. A coiled-coil region spans residues 56 to 180; the sequence is GILAELNTEI…AIDESLQLLS (125 aa). Residues 190-225 constitute a propeptide that is removed on maturation; sequence IQKVQKNLTKIQQSLKRHSTFQTFIKTLLEIAVEAN. Residues 262 to 354 adopt a coiled-coil conformation; it reads KDFEARVIQL…AHQALDLLNQ (93 aa).

This sequence belongs to the TMP family. Post-translationally, two components are produced by post-translational processing from the precursor peptide.

It localises to the trichocyst. Functionally, structural protein that crystallize inside the trichocyst matrix. In Paramecium tetraurelia, this protein is Trichocyst matrix protein T1-B (T1B).